Reading from the N-terminus, the 883-residue chain is Alanine--tRNA ligase (883 aa).

Zn(2+) contacts are provided by H563, H567, C677, and H681.

The protein belongs to the class-II aminoacyl-tRNA synthetase family. Zn(2+) serves as cofactor.

Its subcellular location is the cytoplasm. It catalyses the reaction tRNA(Ala) + L-alanine + ATP = L-alanyl-tRNA(Ala) + AMP + diphosphate. Its function is as follows. Catalyzes the attachment of alanine to tRNA(Ala) in a two-step reaction: alanine is first activated by ATP to form Ala-AMP and then transferred to the acceptor end of tRNA(Ala). Also edits incorrectly charged Ser-tRNA(Ala) and Gly-tRNA(Ala) via its editing domain. The polypeptide is Alanine--tRNA ligase (Cereibacter sphaeroides (strain ATCC 17029 / ATH 2.4.9) (Rhodobacter sphaeroides)).